The following is a 648-amino-acid chain: Macrolide export ATP-binding/permease protein MacB (648 aa).

The ABC transporter domain maps to 5–243 (LELCNVSRSY…QGVDAAVVNT (239 aa)). Residue 41–48 (GVSGSGKS) coordinates ATP. 5 helical membrane-spanning segments follow: residues 273-293 (LLTMLGIIIGIASVVSIVVVG), 417-437 (ANVVGEVVLVGNMPVIVIGVA), 523-543 (LFLTLVAVISLVVGGIGVMNI), 578-598 (LVCLVGGALGISLSMFIAFML), and 611-631 (LTALASAFLCSTFTGILFGWL).

Belongs to the ABC transporter superfamily. Macrolide exporter (TC 3.A.1.122) family. In terms of assembly, homodimer. Part of the tripartite efflux system MacAB-TolC, which is composed of an inner membrane transporter, MacB, a periplasmic membrane fusion protein, MacA, and an outer membrane component, TolC. The complex forms a large protein conduit and can translocate molecules across both the inner and outer membranes. Interacts with MacA.

It is found in the cell inner membrane. Part of the tripartite efflux system MacAB-TolC. MacB is a non-canonical ABC transporter that contains transmembrane domains (TMD), which form a pore in the inner membrane, and an ATP-binding domain (NBD), which is responsible for energy generation. Confers resistance against macrolides. This is Macrolide export ATP-binding/permease protein MacB from Salmonella paratyphi A (strain ATCC 9150 / SARB42).